The sequence spans 156 residues: Small ribosomal subunit protein uS7 (156 aa).

This sequence belongs to the universal ribosomal protein uS7 family. In terms of assembly, part of the 30S ribosomal subunit. Contacts proteins S9 and S11.

Functionally, one of the primary rRNA binding proteins, it binds directly to 16S rRNA where it nucleates assembly of the head domain of the 30S subunit. Is located at the subunit interface close to the decoding center, probably blocks exit of the E-site tRNA. This is Small ribosomal subunit protein uS7 from Pectobacterium carotovorum subsp. carotovorum (strain PC1).